The primary structure comprises 296 residues: Formylmethanofuran--tetrahydromethanopterin formyltransferase-like protein (296 aa).

This sequence belongs to the FTR family.

The chain is Formylmethanofuran--tetrahydromethanopterin formyltransferase-like protein (ehaS) from Methanothermobacter marburgensis (strain ATCC BAA-927 / DSM 2133 / JCM 14651 / NBRC 100331 / OCM 82 / Marburg) (Methanobacterium thermoautotrophicum).